The following is a 621-amino-acid chain: Methionine--tRNA ligase (621 aa).

Positions 11-21 match the 'HIGH' region motif; it reads PYANGPRHIGH. Residues cysteine 143, cysteine 146, cysteine 156, and cysteine 159 each contribute to the Zn(2+) site. The short motif at 347–351 is the 'KMSKS' region element; it reads KFSSS. Serine 350 serves as a coordination point for ATP.

This sequence belongs to the class-I aminoacyl-tRNA synthetase family. MetG type 1 subfamily. Monomer. It depends on Zn(2+) as a cofactor.

The protein resides in the cytoplasm. The enzyme catalyses tRNA(Met) + L-methionine + ATP = L-methionyl-tRNA(Met) + AMP + diphosphate. Is required not only for elongation of protein synthesis but also for the initiation of all mRNA translation through initiator tRNA(fMet) aminoacylation. This is Methionine--tRNA ligase from Bifidobacterium longum subsp. infantis (strain ATCC 15697 / DSM 20088 / JCM 1222 / NCTC 11817 / S12).